The chain runs to 198 residues: Nascent polypeptide-associated complex subunit alpha (198 aa).

In terms of domain architecture, NAC-A/B spans 48–113; it reads ITRVVLKRTR…QAAAETGSVS (66 aa). Residues 159–198 form the UBA domain; the sequence is LEDSDIKLVMEQANVSRNKAINGLKKNDSDVVNTIMDLCK.

Belongs to the NAC-alpha family. In terms of assembly, part of the nascent polypeptide-associated complex (NAC), consisting of EGD2 and EGD1. NAC associates with ribosomes via EGD1.

It is found in the cytoplasm. It localises to the nucleus. In terms of biological role, component of the nascent polypeptide-associated complex (NAC), a dynamic component of the ribosomal exit tunnel, protecting the emerging polypeptides from interaction with other cytoplasmic proteins to ensure appropriate nascent protein targeting. The NAC complex also promotes mitochondrial protein import by enhancing productive ribosome interactions with the outer mitochondrial membrane and blocks the inappropriate interaction of ribosomes translating non-secretory nascent polypeptides with translocation sites in the membrane of the endoplasmic reticulum. EGD2 may also be involved in transcription regulation. In Yarrowia lipolytica (strain CLIB 122 / E 150) (Yeast), this protein is Nascent polypeptide-associated complex subunit alpha (EGD2).